The following is a 554-amino-acid chain: MRSNMIKKGIDRAPHRSLLRAAGVKEEDMDKPFIGVCNSYIDIIPGHMHLNKFAEVAKEAIIEAGGIPFEFNTIGVDDGIAMGHIGMRYSLPSREIICDAAETVINAHWFDGVFYIPNCDKITPGMLMAAVRTNVPAVFVSGGPMEAGRTKEGKSLSLVSVFEGVGAFSSGKMTREELLEIEQLACPTCGSCSGMFTANSMNSLMEMLGLALPGNGTLVATSTERHNLIKDAAKHLINLIEKDIRPRDIVTEETIDDAFALDMAMGGSTNTVLHTLAIANEAEIDYDLTRINEVAERVPYLCKISPASDYSMDDVHKAGGVAAIMKELIEMGAVKGDRITITGKSLYENVAHAQITNTDVIRTKETAYSPVGGLSILYGNLAPDGAVIKVGAVDPSIKTFTGEAIVFNSQEEAQEQINNGAVKEGQVVVIRYEGPKGGPGMPEMLAPTSAIQGRGLGTKVALITDGRFSGASRGISIGHISPEAAEGGPIAFVENGDMIKIDLIERTIEWEISEEELAKRREGWTEPEPKVKKGYLARYSKLVTSANTGGVMKI.

Residue Asp-78 participates in Mg(2+) binding. Cys-119 contributes to the [2Fe-2S] cluster binding site. Mg(2+)-binding residues include Asp-120 and Lys-121. Lys-121 carries the post-translational modification N6-carboxylysine. Residue Cys-192 participates in [2Fe-2S] cluster binding. Glu-443 is a Mg(2+) binding site. Ser-469 (proton acceptor) is an active-site residue.

This sequence belongs to the IlvD/Edd family. As to quaternary structure, homodimer. [2Fe-2S] cluster serves as cofactor. Requires Mg(2+) as cofactor.

It catalyses the reaction (2R)-2,3-dihydroxy-3-methylbutanoate = 3-methyl-2-oxobutanoate + H2O. The enzyme catalyses (2R,3R)-2,3-dihydroxy-3-methylpentanoate = (S)-3-methyl-2-oxopentanoate + H2O. The protein operates within amino-acid biosynthesis; L-isoleucine biosynthesis; L-isoleucine from 2-oxobutanoate: step 3/4. It participates in amino-acid biosynthesis; L-valine biosynthesis; L-valine from pyruvate: step 3/4. In terms of biological role, functions in the biosynthesis of branched-chain amino acids. Catalyzes the dehydration of (2R,3R)-2,3-dihydroxy-3-methylpentanoate (2,3-dihydroxy-3-methylvalerate) into 2-oxo-3-methylpentanoate (2-oxo-3-methylvalerate) and of (2R)-2,3-dihydroxy-3-methylbutanoate (2,3-dihydroxyisovalerate) into 2-oxo-3-methylbutanoate (2-oxoisovalerate), the penultimate precursor to L-isoleucine and L-valine, respectively. This is Dihydroxy-acid dehydratase from Shouchella clausii (strain KSM-K16) (Alkalihalobacillus clausii).